We begin with the raw amino-acid sequence, 660 residues long: MELPVCFYEERLRQQETEIKSLAAEIERLKNCGFVSETPSLEGLREENAKLKYRLNILRKSLLEEKKKSSKSMININAQIQEIFGTAIGAAYPELQNAPLAVTPSQQPKFGDYQCNSAMAITQMLKAMNQKVSPREIADKIVKNIPTNELVEKVDIAGPGFINVHLHKDFTSKQISKLLVNGVQPPVIWERKKVVVDFSSPNIAKEMHVGHLRSTVIGDSICRLFEFVGHDVLRLNHLGDWGTQFGMLIAHLQDKFPDYLTVSPPIGDLQSFYKESKKRFDEDEEFKKRAYQCVVQLQNKTPNFIQAWNLICDVSRKEFQKIYDCLDISIIDRGESFYQDRMIGVVKEFEEKGLVQVDEGRKVVFPPGCSVPLTIVKSDGGFTYDTSDLAALKQRLQEEKADMIIYVIDSGQAIHMQNVFSAGRMIGWYDPKVTRIEHAGFGVVLGEDKKKFKTRSGDTVRLIDLLDEGLKRSMEKLKDKGRDKVLTAEELLAAQTSVAFGCIKYADLSHNRMNDYIFSFDKMLDDRGNTAAYLLYAYTRIRSIARLANISDEDLHKAAKETEIILEHEKEWKLSKCILRFPEILQKILDDLLLHTLCDYLYELATTFTEFYDNCYCVEKDRQTGQIVKVNMSRLLLCDATAAVMAKGFDILGIKPVQKM.

The interval Met1–Ser72 is could be involved in the assembly of the multisynthetase complex. Residues Ser200–Asn202, His211, Tyr384, Asp388, and Gln412 contribute to the L-arginine site. The 'HIGH' region signature appears at Pro201–Leu212. The interaction with tRNA stretch occupies residues Asn529–Ser543.

This sequence belongs to the class-I aminoacyl-tRNA synthetase family. In terms of assembly, monomer; also part of a multisubunit complex that groups tRNA ligases for Arg, Asp, Glu, Gln, Ile, Leu, Lys, Met and Pro.

Its subcellular location is the cytoplasm. It localises to the cytosol. The enzyme catalyses tRNA(Arg) + L-arginine + ATP = L-arginyl-tRNA(Arg) + AMP + diphosphate. Functionally, forms part of a macromolecular complex that catalyzes the attachment of specific amino acids to cognate tRNAs during protein synthesis. The polypeptide is Arginine--tRNA ligase, cytoplasmic (rars1) (Xenopus tropicalis (Western clawed frog)).